Reading from the N-terminus, the 322-residue chain is Protein-L-isoaspartate O-methyltransferase (322 aa).

Residues M1–P101 are disordered. Positions E14 to E29 are enriched in basic and acidic residues. Composition is skewed to low complexity over residues A33–A51 and H76–G91. S170 is a catalytic residue.

It belongs to the methyltransferase superfamily. L-isoaspartyl/D-aspartyl protein methyltransferase family.

Its subcellular location is the cytoplasm. It carries out the reaction [protein]-L-isoaspartate + S-adenosyl-L-methionine = [protein]-L-isoaspartate alpha-methyl ester + S-adenosyl-L-homocysteine. Functionally, catalyzes the methyl esterification of L-isoaspartyl residues in peptides and proteins that result from spontaneous decomposition of normal L-aspartyl and L-asparaginyl residues. It plays a role in the repair and/or degradation of damaged proteins. The chain is Protein-L-isoaspartate O-methyltransferase from Burkholderia pseudomallei (strain 1106a).